The sequence spans 221 residues: Max dimerization protein 1 (221 aa).

Residues 21–49 carry the Nuclear localization signal motif; that stretch reads RREREAEHGYASMLPYNSKERDGLKRKSK. Disordered regions lie at residues 29–67 and 178–221; these read GYAS…EKNR and SSSS…SIAL. Positions 55 to 107 constitute a bHLH domain; it reads SSRSTHNEMEKNRRAHLRLCLEKLKMLVPLGPESNRHTTLSLLMRAKLHIKKL. The span at 193–221 shows a compositional bias: polar residues; it reads MQSICSDEGYSSSGLKSIGLQNNPKSIAL.

Heterodimer with MAX; the interaction is required for DNA-binding. DNA binding requires dimerization with another bHLH protein; does not form homodimers, and does not bind to DNA in the absence of MAX in vitro. As to expression, expressed primarily in cells that have undergone terminal differentiation including notochord, floor plate and cement gland.

It localises to the nucleus. Its function is as follows. Component of a transcriptional repressor complex together with MAX. In complex with MAX binds to the core DNA sequence 5'-CAC[GA]TG-3'. Antagonizes MYC transcriptional activity by competing with MYC for MAX binding. Binds to the TERT promoter and represses telomerase expression, possibly by interfering with MYC binding. This is Max dimerization protein 1 (mxd1) from Xenopus laevis (African clawed frog).